The primary structure comprises 148 residues: Large ribosomal subunit protein bL9 (148 aa).

This sequence belongs to the bacterial ribosomal protein bL9 family.

Its function is as follows. Binds to the 23S rRNA. The sequence is that of Large ribosomal subunit protein bL9 from Prosthecochloris aestuarii (strain DSM 271 / SK 413).